The chain runs to 123 residues: Small ribosomal subunit protein uS12 (123 aa).

The tract at residues 11-32 (PRQEKTYREKARHLGASPQKRG) is disordered. Position 89 is a 3-methylthioaspartic acid (Asp-89).

The protein belongs to the universal ribosomal protein uS12 family. Part of the 30S ribosomal subunit. Contacts proteins S8 and S17. May interact with IF1 in the 30S initiation complex.

Functionally, with S4 and S5 plays an important role in translational accuracy. In terms of biological role, interacts with and stabilizes bases of the 16S rRNA that are involved in tRNA selection in the A site and with the mRNA backbone. Located at the interface of the 30S and 50S subunits, it traverses the body of the 30S subunit contacting proteins on the other side and probably holding the rRNA structure together. The combined cluster of proteins S8, S12 and S17 appears to hold together the shoulder and platform of the 30S subunit. This Methylocella silvestris (strain DSM 15510 / CIP 108128 / LMG 27833 / NCIMB 13906 / BL2) protein is Small ribosomal subunit protein uS12.